The primary structure comprises 279 residues: Proteasome subunit alpha type-1 (279 aa).

Residue Y103 is modified to Phosphotyrosine. Basic and acidic residues predominate over residues 235-249; that stretch reads HVAIAKENDNDTPRN. Positions 235-279 are disordered; the sequence is HVAIAKENDNDTPRNDDDDDRPSPPEEPAAGPRDPEVLVATEQRP.

Belongs to the peptidase T1A family. The 26S proteasome consists of a 20S proteasome core and two 19S regulatory subunits. The 20S proteasome core is composed of 28 subunits that are arranged in four stacked rings, resulting in a barrel-shaped structure. The two end rings are each formed by seven alpha subunits, and the two central rings are each formed by seven beta subunits. The catalytic chamber with the active sites is on the inside of the barrel. Interacts with PI31.

It localises to the cytoplasm. The protein resides in the nucleus. Functionally, the proteasome is a multicatalytic proteinase complex which is characterized by its ability to cleave peptides with Arg, Phe, Tyr, Leu, and Glu adjacent to the leaving group at neutral or slightly basic pH. The proteasome has an ATP-dependent proteolytic activity. The sequence is that of Proteasome subunit alpha type-1 (Prosalpha6) from Drosophila melanogaster (Fruit fly).